The primary structure comprises 326 residues: Putative HTH-type transcriptional regulatory protein MMP0678 (326 aa).

Residues 128–183 form the HTH cro/C1-type domain; the sequence is LRETREKLKISVGELAEVSRVSRKTIYKYEQNEANPSAEVAIKIEEYLDVPLIKGI. The segment at residues 139–158 is a DNA-binding region (H-T-H motif); sequence VGELAEVSRVSRKTIYKYEQ.

This Methanococcus maripaludis (strain DSM 14266 / JCM 13030 / NBRC 101832 / S2 / LL) protein is Putative HTH-type transcriptional regulatory protein MMP0678.